The following is a 223-amino-acid chain: Voltage-dependent calcium channel gamma-1 subunit (223 aa).

The Cytoplasmic portion of the chain corresponds to 1–10; that stretch reads MSQTKTAKVR. A helical membrane pass occupies residues 11–29; that stretch reads VTLFFILAGGVLAMVAVVT. Over 30–109 the chain is Extracellular; the sequence is DHWAVLSPHL…TQKEYSISAA (80 aa). N-linked (GlcNAc...) asparagine glycans are attached at residues Asn43 and Asn80. Residues Cys57 and Cys81 are joined by a disulfide bond. Residues 110–130 form a helical membrane-spanning segment; sequence AIAIFSLGFIIIGSICAFLSF. The Cytoplasmic portion of the chain corresponds to 131–135; sequence GNKRD. Residues 136 to 156 form a helical membrane-spanning segment; it reads YLLRPASMFYAFAGLCLIVSV. The Extracellular portion of the chain corresponds to 157-180; it reads EVMRQSVKRMIDSEDTVWIEYYYS. A helical membrane pass occupies residues 181–205; sequence WSFACACAGFTLLFLGGLFLLLFSL. At 206 to 223 the chain is on the cytoplasmic side; that stretch reads PRMPQNPWESCMDTESEH.

It belongs to the PMP-22/EMP/MP20 family. CACNG subfamily. In terms of assembly, component of a calcium channel complex consisting of a pore-forming alpha subunit (CACNA1S) and the ancillary subunits CACNB1 or CACNB2, CACNG1 and CACNA2D1. The channel complex contains alpha, beta, gamma and delta subunits in a 1:1:1:1 ratio, i.e. it contains either CACNB1 or CACNB2. N-glycosylated. As to expression, skeletal muscle.

The protein resides in the cell membrane. It localises to the sarcolemma. Regulatory subunit of the voltage-gated calcium channel that gives rise to L-type calcium currents in skeletal muscle. Regulates channel inactivation kinetics. This Rattus norvegicus (Rat) protein is Voltage-dependent calcium channel gamma-1 subunit (Cacng1).